A 198-amino-acid polypeptide reads, in one-letter code: Probable GTP-binding protein EngB (198 aa).

One can recognise an EngB-type G domain in the interval 22–197 (TLPEYAFIGR…LDYIEGINNS (176 aa)). Residues 30-37 (GRSNVGKS), 57-61 (GKTQL), 75-78 (DLPG), 142-145 (TKAD), and 175-178 (ITSA) contribute to the GTP site. Mg(2+) is bound by residues S37 and T59.

The protein belongs to the TRAFAC class TrmE-Era-EngA-EngB-Septin-like GTPase superfamily. EngB GTPase family. The cofactor is Mg(2+).

Functionally, necessary for normal cell division and for the maintenance of normal septation. This chain is Probable GTP-binding protein EngB, found in Christiangramia forsetii (strain DSM 17595 / CGMCC 1.15422 / KT0803) (Gramella forsetii).